The following is a 509-amino-acid chain: DAP3-binding cell death enhancer 1 (509 aa).

The N-terminal 23 residues, 1 to 23 (MWRLTGILGRALPRLLGPGFRGI), are a transit peptide targeting the mitochondrion. Disordered stretches follow at residues 19-60 (GFRG…RNRD) and 143-185 (VLPS…PGLL). A propeptide spans 24–101 (TPKPTSSDGP…AVLALHLARQ (78 aa)) (extended MTS). The span at 26–40 (KPTSSDGPQTTSTTL) shows a compositional bias: polar residues. Basic and acidic residues-rich tracts occupy residues 46–60 (NFDR…RNRD) and 156–168 (GLRE…EEPA). 7 TPR repeats span residues 213–245 (AGPP…QLSV), 246–278 (AIAF…RGYS), 279–313 (KAQY…VQGH), 314–351 (SLAQ…DSGL), 352–385 (TEAQ…SNGD), 386–423 (SQSR…GNEP), and 470–498 (ASST…AMPS). The short motif at 307–326 (LAAVQGHSLAQYRYARCLLQ) is the SIFI-degron element.

The protein belongs to the DELE1 family. As to quaternary structure, interacts with DAP3. Interacts (via TPR repeats) with EIF2AK1/HRI; activating the protein kinase activity of EIF2AK1/HRI, thereby promoting the integrated stress response (ISR). In terms of assembly, homooctamer; oligomerization is required to activate EIF2AK1/HRI. Interacts (via TPR repeats) with EIF2AK1/HRI; activating the protein kinase activity of EIF2AK1/HRI, thereby promoting the integrated stress response (ISR). Post-translationally, unstable protein in absence of stress: imported in the mitochondrial matrix following processing by the mitochondrial-processing peptidase (MPP), where it is degraded by LONP1. Stabilized in response to iron deficiency: iron deficiency impairs mitochondrial import, promoting localization at the mitochondrial surface and stabilization. Cleaved by OMA1 in response to mitochondrial stress, generating the DAP3-binding cell death enhancer 1 short form (DELE1(S) or S-DELE1) that accumulates in the cytosol and activates the protein kinase activity of EIF2AK1/HRI. Protein cleavage by OMA1 can take place at different positions, and apparently does not require a specific sequence motif. Ubiquitinated and degraded by the SIFI complex once the mitochondrial stress has been resolved, thereby providing stress response silencing. Within the SIFI complex, UBR4 initiates ubiquitin chain that are further elongated or branched by KCMF1.

Its subcellular location is the mitochondrion. The protein localises to the mitochondrion outer membrane. The protein resides in the mitochondrion inner membrane. It is found in the cytoplasm. It localises to the cytosol. Its function is as follows. Protein kinase activator that acts as a key activator of the integrated stress response (ISR) following various stresses, such as iron deficiency, mitochondrial stress or mitochondrial DNA breaks. Detects impaired protein import and processing in mitochondria, activating the ISR. May also required for the induction of death receptor-mediated apoptosis through the regulation of caspase activation. Protein kinase activator that activates the ISR in response to iron deficiency: iron deficiency impairs mitochondrial import, promoting DELE1 localization at the mitochondrial surface, where it binds and activates EIF2AK1/HRI to trigger the ISR. Functionally, protein kinase activator generated by protein cleavage in response to mitochondrial stress, which accumulates in the cytosol and specifically binds to and activates the protein kinase activity of EIF2AK1/HRI. It thereby activates the integrated stress response (ISR): EIF2AK1/HRI activation promotes eIF-2-alpha (EIF2S1) phosphorylation, leading to a decrease in global protein synthesis and the induction of selected genes, including the transcription factor ATF4, the master transcriptional regulator of the ISR. Also acts as an activator of PRKN-independent mitophagy: activates the protein kinase activity of EIF2AK1/HRI in response to mitochondrial damage, promoting eIF-2-alpha (EIF2S1) phosphorylation, leading to mitochondrial localization of EIF2S1 followed by induction of mitophagy. This Rattus norvegicus (Rat) protein is DAP3-binding cell death enhancer 1.